The sequence spans 206 residues: Large ribosomal subunit protein mL40 (206 aa).

The N-terminal 46 residues, 1–46, are a transit peptide targeting the mitochondrion; sequence MATGVMLCAARALRPRSWIPGTCQAHVRHTHQRASLLAFWDLIPMR. Residues 170 to 189 form a disordered region; sequence PFEKEGPHYTPPISNYQAPE.

It belongs to the mitochondrion-specific ribosomal protein mL40 family. Component of the mitochondrial ribosome large subunit (39S) which comprises a 16S rRNA and about 50 distinct proteins. In terms of tissue distribution, ubiquitous.

The protein resides in the mitochondrion. The chain is Large ribosomal subunit protein mL40 (Mrpl40) from Mus musculus (Mouse).